A 2472-amino-acid chain; its full sequence is Centrosomal protein of 290 kDa (2472 aa).

A self-association (with itself or C-terminus) region spans residues 1–689; the sequence is MPPNIKWKEL…MESKNAEGIF (689 aa). 3 coiled-coil regions span residues 59 to 747, 1129 to 1392, and 1459 to 1492; these read MKMK…LRQS, RQRI…QQSK, and QVIL…ILSR. The interval 128 to 164 is disordered; that stretch reads DRELEDMEKELDKEKKVNEQLALRNEEAENENSKLRR. Over residues 137–164 the composition is skewed to basic and acidic residues; the sequence is ELDKEKKVNEQLALRNEEAENENSKLRR. An interaction with IQCB1 region spans residues 690–890; the sequence is DASLHLKAQV…TVLQVNEKSL (201 aa). Disordered regions lie at residues 1691-1713 and 2451-2472; these read AHKD…SRAP and PSPL…FPIY. Positions 1697 to 1713 are enriched in polar residues; that stretch reads SLKSELQAQKEANSRAP. Positions 1960-2472 are self-association (with itself or N-terminus); it reads TTGMTVDQVL…GESPHSFPIY (513 aa).

In terms of assembly, part of the tectonic-like complex (also named B9 complex). Interacts with ATF4 via its N-terminal region. Associates with the BBSome complex, interacting (via N-terminus) with BBS4. Interacts with IQCB1/NPHP5; IQCB1 and CEP290/NPHP6 are proposed to form a functional NPHP5-6 module localized to the centrosome. Interacts with NPHP4; the interaction likely requires additional interactors. Interacts with ZNF423, FAM161A, CEP162, CEP162, CEP131, TALPID3, CCDC13, CC2D2A, RPGRIP1. Can self-associate (homo- or heteromeric). Interacts with CCP110; required for suppressing cilia formation. Interacts with RPGR. Associates (via C-terminus) with microtubules; association to microtubule is reduced in response to cellular stress, such as ultraviolet light (UV) radiation or heat shock, in a process that requires p38 MAP kinase signaling. Interacts with FAM161A. Interacts with PCM1. Interacts with CCDC66. Interacts with ARMC9 and CSPP1. In terms of processing, ubiquitinated. May undergo monoubiquitination; monoubiquitination is inhibited in response to cellular stress, such as ultraviolet light (UV) radiation or heat shock, but does not cause its displacement from centriolar satellites. Expressed in multiple organs during early postnatal development, with highest levels in hindbrain.

The protein localises to the cytoplasm. Its subcellular location is the cytoskeleton. The protein resides in the microtubule organizing center. It localises to the centrosome. It is found in the centriolar satellite. The protein localises to the nucleus. Its subcellular location is the centriole. The protein resides in the cell projection. It localises to the cilium. It is found in the cilium basal body. The protein localises to the cytoplasmic vesicle. Functionally, involved in early and late steps in cilia formation. Its association with CCP110 is required for inhibition of primary cilia formation by CCP110. May play a role in early ciliogenesis in the disappearance of centriolar satellites and in the transition of primary ciliar vesicles (PCVs) to capped ciliary vesicles (CCVs). Required for the centrosomal recruitment of RAB8A and for the targeting of centriole satellite proteins to centrosomes such as of PCM1. Required for the correct localization of ciliary and phototransduction proteins in retinal photoreceptor cells; may play a role in ciliary transport processes. Required for efficient recruitment of RAB8A to primary cilium. In the ciliary transition zone is part of the tectonic-like complex (also named B9 complex) which is required for tissue-specific ciliogenesis and may regulate ciliary membrane composition. Involved in regulation of the BBSome complex integrity, specifically for presence of BBS2, BBS5 and BBS8/TTC8 in the complex, and in ciliary targeting of selected BBSome cargos. May play a role in controlling entry of the BBSome complex to cilia possibly implicating IQCB1/NPHP5. Activates ATF4-mediated transcription. The protein is Centrosomal protein of 290 kDa of Mus musculus (Mouse).